The following is a 338-amino-acid chain: UDP-3-O-acylglucosamine N-acyltransferase (338 aa).

Residue His-239 is the Proton acceptor of the active site.

It belongs to the transferase hexapeptide repeat family. LpxD subfamily. In terms of assembly, homotrimer.

It catalyses the reaction a UDP-3-O-[(3R)-3-hydroxyacyl]-alpha-D-glucosamine + a (3R)-hydroxyacyl-[ACP] = a UDP-2-N,3-O-bis[(3R)-3-hydroxyacyl]-alpha-D-glucosamine + holo-[ACP] + H(+). It participates in bacterial outer membrane biogenesis; LPS lipid A biosynthesis. Catalyzes the N-acylation of UDP-3-O-acylglucosamine using 3-hydroxyacyl-ACP as the acyl donor. Is involved in the biosynthesis of lipid A, a phosphorylated glycolipid that anchors the lipopolysaccharide to the outer membrane of the cell. The chain is UDP-3-O-acylglucosamine N-acyltransferase from Xylella fastidiosa (strain M12).